A 526-amino-acid chain; its full sequence is Peptide chain release factor 3 (526 aa).

The tr-type G domain occupies 9 to 277; the sequence is DLRRTFAIIS…GLTKWAPKPL (269 aa). Residues 18 to 25, 86 to 90, and 140 to 143 contribute to the GTP site; these read SHPDAGKT, DTPGH, and NKMD.

Belongs to the TRAFAC class translation factor GTPase superfamily. Classic translation factor GTPase family. PrfC subfamily.

Its subcellular location is the cytoplasm. Functionally, increases the formation of ribosomal termination complexes and stimulates activities of RF-1 and RF-2. It binds guanine nucleotides and has strong preference for UGA stop codons. It may interact directly with the ribosome. The stimulation of RF-1 and RF-2 is significantly reduced by GTP and GDP, but not by GMP. This chain is Peptide chain release factor 3, found in Colwellia psychrerythraea (strain 34H / ATCC BAA-681) (Vibrio psychroerythus).